Here is a 431-residue protein sequence, read N- to C-terminus: ATP-dependent RNA helicase DBP8 (431 aa).

A Q motif motif is present at residues 2-30 (ADFKSLGLSKWLTESLRAMKITQPTAIQK). The Helicase ATP-binding domain maps to 33-209 (IPKILEGRDC…NAPVQKGKPP (177 aa)). 46–53 (AKTGSGKT) lines the ATP pocket. The DEAD box motif lies at 155-158 (DEAD). The 148-residue stretch at 242–389 (YLYQLLTCEE…TNKVHDTAVI (148 aa)) folds into the Helicase C-terminal domain. Positions 404 to 431 (LMAMQKENFGERKRQQKKKQNDGKSLRS) are disordered. The span at 411–431 (NFGERKRQQKKKQNDGKSLRS) shows a compositional bias: basic and acidic residues.

It belongs to the DEAD box helicase family. DDX49/DBP8 subfamily. As to quaternary structure, interacts with ESF2.

It is found in the nucleus. Its subcellular location is the nucleolus. The catalysed reaction is ATP + H2O = ADP + phosphate + H(+). Its function is as follows. ATP-binding RNA helicase involved in 40S ribosomal subunit biogenesis and is required for the normal formation of 18S rRNAs through pre-rRNA processing at A0, A1 and A2 sites. Required for vegetative growth. The polypeptide is ATP-dependent RNA helicase DBP8 (DBP8) (Saccharomyces cerevisiae (strain YJM789) (Baker's yeast)).